The sequence spans 227 residues: Ornithine decarboxylase antizyme 1 (227 aa).

Belongs to the ODC antizyme family. Interacts with ODC1 and thereby sterically blocks ODC homodimerization. Forms a ternary complex with PSMB4 and OAZ1 before PSMB4 is incorporated into the 20S proteasome. Interacts with AZIN2; this interaction disrupts the interaction between the antizyme and ODC1. Interacts with FAM171A1.

Functionally, ornithine decarboxylase (ODC) antizyme protein that negatively regulates ODC activity and intracellular polyamine biosynthesis and uptake in response to increased intracellular polyamine levels. Binds to ODC monomers, inhibiting the assembly of the functional ODC homodimer, and targets the monomers for ubiquitin-independent proteolytic destruction by the 26S proteasome. Triggers ODC degradation by inducing the exposure of a cryptic proteasome-interacting surface of ODC. Stabilizes AZIN2 by interfering with its ubiquitination. Also inhibits cellular uptake of polyamines by inactivating the polyamine uptake transporter. SMAD1/OAZ1/PSMB4 complex mediates the degradation of the CREBBP/EP300 repressor SNIP1. Involved in the translocation of AZIN2 from ER-Golgi intermediate compartment (ERGIC) to the cytosol. In Mus musculus (Mouse), this protein is Ornithine decarboxylase antizyme 1 (Oaz1).